A 1110-amino-acid polypeptide reads, in one-letter code: Isoleucine--tRNA ligase (1110 aa).

The 'HIGH' region signature appears at 47 to 57 (PSANGTPGIHH). The 'KMSKS' region motif lies at 658-662 (KMSKR). Residue Lys661 participates in ATP binding.

This sequence belongs to the class-I aminoacyl-tRNA synthetase family. IleS type 2 subfamily. As to quaternary structure, monomer. It depends on Zn(2+) as a cofactor.

The protein localises to the cytoplasm. The catalysed reaction is tRNA(Ile) + L-isoleucine + ATP = L-isoleucyl-tRNA(Ile) + AMP + diphosphate. Functionally, catalyzes the attachment of isoleucine to tRNA(Ile). As IleRS can inadvertently accommodate and process structurally similar amino acids such as valine, to avoid such errors it has two additional distinct tRNA(Ile)-dependent editing activities. One activity is designated as 'pretransfer' editing and involves the hydrolysis of activated Val-AMP. The other activity is designated 'posttransfer' editing and involves deacylation of mischarged Val-tRNA(Ile). The chain is Isoleucine--tRNA ligase from Cytophaga hutchinsonii (strain ATCC 33406 / DSM 1761 / CIP 103989 / NBRC 15051 / NCIMB 9469 / D465).